The sequence spans 425 residues: Serine--tRNA ligase (425 aa).

Residues 110–134 (NLPSADAPEGKSEADNVEVKRWGEP) form a disordered region. Residues 117 to 134 (PEGKSEADNVEVKRWGEP) are compositionally biased toward basic and acidic residues. Residue 233-235 (TAE) coordinates L-serine. 264–266 (RRE) contacts ATP. E287 contributes to the L-serine binding site. 351–354 (EISS) is an ATP binding site. Residue S385 participates in L-serine binding.

Belongs to the class-II aminoacyl-tRNA synthetase family. Type-1 seryl-tRNA synthetase subfamily. In terms of assembly, homodimer. The tRNA molecule binds across the dimer.

The protein resides in the cytoplasm. It carries out the reaction tRNA(Ser) + L-serine + ATP = L-seryl-tRNA(Ser) + AMP + diphosphate + H(+). It catalyses the reaction tRNA(Sec) + L-serine + ATP = L-seryl-tRNA(Sec) + AMP + diphosphate + H(+). The protein operates within aminoacyl-tRNA biosynthesis; selenocysteinyl-tRNA(Sec) biosynthesis; L-seryl-tRNA(Sec) from L-serine and tRNA(Sec): step 1/1. Catalyzes the attachment of serine to tRNA(Ser). Is also able to aminoacylate tRNA(Sec) with serine, to form the misacylated tRNA L-seryl-tRNA(Sec), which will be further converted into selenocysteinyl-tRNA(Sec). In Synechococcus sp. (strain RCC307), this protein is Serine--tRNA ligase.